Consider the following 199-residue polypeptide: MITYTKPLSKLIGHFEKFPGIGPRTAQRLALFILKQPESTIRDFSKALLEAHNNVGRCKKCFNLTSEDECEICRNTERNQKLICVVSETKDLLALERAREFKGVYHVIGGLISPMDSVGPELLEIRSLVERVSKSEIDEIILALTPSVEGDTTSLYIGKLLSPFTKVTRIAYGLPMGSELEYVDEVTLARALEGRTKLN.

The segment at 58–73 (CKKCFNLTSEDECEIC) adopts a C4-type zinc-finger fold. Residues 81-175 (KLICVVSETK…KVTRIAYGLP (95 aa)) enclose the Toprim domain.

This sequence belongs to the RecR family.

Its function is as follows. May play a role in DNA repair. It seems to be involved in an RecBC-independent recombinational process of DNA repair. It may act with RecF and RecO. In Prochlorococcus marinus (strain AS9601), this protein is Recombination protein RecR.